A 593-amino-acid chain; its full sequence is ATP-dependent RNA helicase MRH4, mitochondrial (593 aa).

The N-terminal 106 residues, 1 to 106 (MFPLRAQSAS…QLRIFPTVRA (106 aa)), are a transit peptide targeting the mitochondrion. The segment covering 42–51 (GANGANRANG) has biased composition (low complexity). The segment at 42 to 63 (GANGANRANGTNSSQPESQSSK) is disordered. Polar residues predominate over residues 52–63 (TNSSQPESQSSK). A Q motif motif is present at residues 130 to 137 (VLKPTPIQ). The Helicase ATP-binding domain maps to 181–399 (INSLQKLKVF…NRIFPTDDSI (219 aa)). 194–201 (AETGSGKT) is a binding site for ATP. Residues 347–350 (DEAD) carry the DEAD box motif. The Helicase C-terminal domain maps to 433–593 (ALAQALYAIT…NAVKRGIQMG (161 aa)).

Belongs to the DEAD box helicase family. MRH4 subfamily.

The protein localises to the mitochondrion. The enzyme catalyses ATP + H2O = ADP + phosphate + H(+). Functionally, ATP-binding RNA helicase involved in mitochondrial RNA metabolism. Required for maintenance of mitochondrial DNA. This chain is ATP-dependent RNA helicase MRH4, mitochondrial (MRH4), found in Scheffersomyces stipitis (strain ATCC 58785 / CBS 6054 / NBRC 10063 / NRRL Y-11545) (Yeast).